The chain runs to 273 residues: MPANRSSDDSTLHLPRILCLHGGGTNARIFRAQCRILTRYLSTAFRLCFAEAPFLSQPGPDVTSVYKEFGPFKRWLRSSARDHPEIDPALATEAIDASLRDAMDEDDRRGATGEWAGLLGFSQGAKMCASLLLRQQVRDATRTSPSARDGPNWRFAVLLAGRGPLVSLDPACLTSPAVVDAGGIAMTAFPDERLLAAGTAHVLRLPTVHVHGMLDPGLEEHRKLLAQYCEEGTARVMEWEGNHRVPIKTKDVVALVGHVLEVATETGVLQRRI.

Active-site charge relay system residues include Ser122, Asp215, and His243.

This sequence belongs to the LovG family.

Its pathway is secondary metabolite biosynthesis. Esterase; part of the gene cluster that mediates the biosynthesis of azaphilone pigments (MonAzPs), a complex mixture of compounds with a common azaphilone skeleton very widely used as food colorants. Within the pathway, pigG may assist the nrPKS pigA in the biosynthesis of the hexaketide precursor. The first step of the pathway is performed by the nrPKS pigA that forms the hexaketide precursor from successive condensations of five malonyl-CoA units, with a simple acetyl-CoA starter unit. The role of esterase pigG is not clear, but it may play at most a supplementary role in the formation of the benzaldehyde produced by the pigA nrPKS. This very reactive benzaldehyde is intercepted by the pigC ketoreductase that to provide the first stable enzyme-free MonAzPs intermediate, 6-(4-hydroxy-2-oxopentyl)-3-methyl-2,4-dioxocyclohexane carbaldehyde, also known as M7PKS-1. The FAD-dependent monooxygenase pigN hydroxylates M7PKS-1 at C-4, which triggers the formation of the pyran ring. PigJ, pigK and pigD are involved in the acetylation of the pyran ring. PigJ and pigK form the two subunits of a dedicated fungal FAS that produces the side chain fatty acyl moiety of MonAzPs and pigD transfers the fatty acyl chain to the C-4 alcohol. PigM and pigO are involved in the elimination of the omega-1 alcohol. PigM acts as an O-acetyltransferase that synthesizes the putative O-11 acetyl intermediate whereas pigO eliminates acetic acid to yield an intermediate with a C10(11) double bond. The dehydration of the C-11 alcohol followed by the reduction of the C6(7) double bond by the NAD(P)H-dependent oxidoreductase pigE increases the electrophilicity of the C-5 ketone of the resulting acyl benzopyran. This in turn sets up the C-5 ketone for an intramolecular Knoevenagel aldol condensation with the C-20 enol of the side chain. This condensation affords the characteristic linear tricyclic carbon skeletons of the yellow pigments that serve as the common precursors for the classical yellow pigments monascin and ankaflavin, orange pigments rubopunctatin and monascorubrin, and red pigments ribropunctamine and monascorubramine. The FAD-dependent oxidoreductase pigF is especially invoved in the biosynthesis of orange and red pigments via desaturation of C6(7). The chain is Esterase pigG from Monascus ruber (Mold).